A 920-amino-acid chain; its full sequence is B3 domain-containing protein REM17 (920 aa).

3 consecutive DNA-binding regions (TF-B3) follow at residues 12 to 105, 153 to 250, and 267 to 361; these read NPHF…LGPS, RFVA…CRAK, and CFEG…LCPT. Disordered stretches follow at residues 405–438, 540–562, and 585–614; these read DDDQTNIGNSSRKKRVSKNPREKVESSSDHSSFV, LACSEGNKSEESEEEGTEDKNTS, and DDDQTNIGNSSKEKRVKKNPVKKAESSSDH. Residues 423-432 are compositionally biased toward basic and acidic residues; it reads NPREKVESSS. The TF-B3 4 DNA-binding region spans 436–531; it reads SFVGSVNPSS…NKPVLSLCPT (96 aa). 2 DNA-binding regions (TF-B3) span residues 616–714 and 727–823; these read SFVA…SLSE and YFVG…LCPA. The span at 842–852 shows a compositional bias: low complexity; the sequence is NSLSSNPSSGD. A disordered region spans residues 842-870; the sequence is NSLSSNPSSGDDSSRSEESEEENMEDKNI.

The protein resides in the nucleus. In Arabidopsis thaliana (Mouse-ear cress), this protein is B3 domain-containing protein REM17 (REM17).